The chain runs to 262 residues: Acyl-[acyl-carrier-protein]--UDP-N-acetylglucosamine O-acyltransferase (262 aa).

The protein belongs to the transferase hexapeptide repeat family. LpxA subfamily. As to quaternary structure, homotrimer.

The protein localises to the cytoplasm. It carries out the reaction a (3R)-hydroxyacyl-[ACP] + UDP-N-acetyl-alpha-D-glucosamine = a UDP-3-O-[(3R)-3-hydroxyacyl]-N-acetyl-alpha-D-glucosamine + holo-[ACP]. Its pathway is glycolipid biosynthesis; lipid IV(A) biosynthesis; lipid IV(A) from (3R)-3-hydroxytetradecanoyl-[acyl-carrier-protein] and UDP-N-acetyl-alpha-D-glucosamine: step 1/6. Involved in the biosynthesis of lipid A, a phosphorylated glycolipid that anchors the lipopolysaccharide to the outer membrane of the cell. This chain is Acyl-[acyl-carrier-protein]--UDP-N-acetylglucosamine O-acyltransferase, found in Campylobacter concisus (strain 13826).